The following is an 889-amino-acid chain: DNA gyrase subunit A (889 aa).

The Topo IIA-type catalytic domain occupies 35–501; it reads LPDVRDGLKP…GFEDLEDEDL (467 aa). Tyrosine 123 (O-(5'-phospho-DNA)-tyrosine intermediate) is an active-site residue. The short motif at 528-534 is the GyrA-box element; that stretch reads QNRGGRG. The disordered stretch occupies residues 811–889; that stretch reads KEDAEDETNE…IQQSLDEDEE (79 aa). The span at 813–823 shows a compositional bias: acidic residues; sequence DAEDETNEDEQ. Over residues 863–875 the composition is skewed to basic and acidic residues; it reads DGRIEVRQDFMDR. The segment covering 876 to 889 has biased composition (acidic residues); that stretch reads VEEDIQQSLDEDEE.

Belongs to the type II topoisomerase GyrA/ParC subunit family. Heterotetramer, composed of two GyrA and two GyrB chains. In the heterotetramer, GyrA contains the active site tyrosine that forms a transient covalent intermediate with DNA, while GyrB binds cofactors and catalyzes ATP hydrolysis.

Its subcellular location is the cytoplasm. The enzyme catalyses ATP-dependent breakage, passage and rejoining of double-stranded DNA.. In terms of biological role, a type II topoisomerase that negatively supercoils closed circular double-stranded (ds) DNA in an ATP-dependent manner to modulate DNA topology and maintain chromosomes in an underwound state. Negative supercoiling favors strand separation, and DNA replication, transcription, recombination and repair, all of which involve strand separation. Also able to catalyze the interconversion of other topological isomers of dsDNA rings, including catenanes and knotted rings. Type II topoisomerases break and join 2 DNA strands simultaneously in an ATP-dependent manner. In Staphylococcus aureus, this protein is DNA gyrase subunit A.